The following is a 403-amino-acid chain: High affinity transport system protein p37 (403 aa).

The signal sequence occupies residues 1 to 23; it reads MLKKLKNFILFSSIFSPIAFAIS. Residue Cys24 is the site of N-palmitoyl cysteine attachment. Residue Cys24 is the site of S-diacylglycerol cysteine attachment.

The protein localises to the cell membrane. In terms of biological role, P37 is part of a high-affinity transport system. The protein is High affinity transport system protein p37 (p37) of Mesomycoplasma hyorhinis (Mycoplasma hyorhinis).